A 309-amino-acid chain; its full sequence is Cysteinyl leukotriene receptor 2 (309 aa).

Residues 1 to 26 (MEVTGTPSSYSNRNCTIENFKKEFYP) lie on the Extracellular side of the membrane. Asparagine 14 carries N-linked (GlcNAc...) asparagine glycosylation. A helical transmembrane segment spans residues 27–47 (IIYLIIFFWGALGNGFSIYVF). Over 48–56 (LQTCKKSTS) the chain is Cytoplasmic. Residues 57-77 (VNVFMLNLATSDFLFISTLPF) form a helical membrane-spanning segment. The Extracellular segment spans residues 78–98 (RADYYFRGSNWIFGDLACRVM). The cysteines at positions 95 and 171 are disulfide-linked. Residues 99 to 119 (SYSLYVNMYTSIYFLTVLSVV) form a helical membrane-spanning segment. Over 120–138 (RFLATVHPFRMFHVTSVRS) the chain is Cytoplasmic. Residues 139–159 (AWILCGIIWVFIMASSALLLV) form a helical membrane-spanning segment. Topologically, residues 160–187 (NGQEEKDNIISCLELSPQKFKSLLIMNH) are extracellular. A helical transmembrane segment spans residues 188–208 (IAVAVGFLLPFLTLTVCYLLI). Residues 209 to 229 (IRILLKAEIPESGPRAAHRKA) are Cytoplasmic-facing. A helical transmembrane segment spans residues 230–250 (LTTIVIAMITFLLCFLPYHAL). Residues 251 to 271 (RTLHLVTWDKDSCGDVLHKAT) are Extracellular-facing. A helical membrane pass occupies residues 272–292 (VITLTMAAANSCFNPFLYYFA). Over 293-309 (GENFKARLRAIFSKVHL) the chain is Cytoplasmic.

This sequence belongs to the G-protein coupled receptor 1 family. In terms of tissue distribution, widely expressed at low levels, with highest expression in the spleen, thymus and adrenal gland, and lower in the kidney, brain and peripheral blood leukocytes.

It is found in the cell membrane. Its function is as follows. Receptor for cysteinyl leukotrienes. The response is mediated via a G-protein that activates a phosphatidylinositol-calcium second messenger system. The rank order of affinities for the leukotrienes is LTC4 = LTD4 &gt;&gt; LTE4. The sequence is that of Cysteinyl leukotriene receptor 2 (Cysltr2) from Mus musculus (Mouse).